We begin with the raw amino-acid sequence, 378 residues long: Alginate lyase (378 aa).

The signal sequence occupies residues 1–28 (MQTPKLIRPTLLSMAILSSMAWATGASA). Substrate contacts are provided by residues 67-68 (SK), 140-141 (HT), and Y258.

Belongs to the polysaccharide lyase 5 family.

Its subcellular location is the periplasm. The catalysed reaction is Eliminative cleavage of alginate to give oligosaccharides with 4-deoxy-alpha-L-erythro-hex-4-enuronosyl groups at their non-reducing ends and beta-D-mannuronate at their reducing end.. The monovalent cation sodium enhances activity but is not absolutely required. Its function is as follows. Catalyzes the depolymerization of alginate by cleaving the beta-1,4 glycosidic bond between two adjacent sugar residues via a beta-elimination mechanism. Degrades deacetylated polymannuronate (polyM) alginate from P.aeruginosa more efficiently than non-deacetylated polyM and alginate from M.pyrifera. AlgL from P.syringae also degrades its own alginate, which may indicate a role in cleaving preformed alginate and/or in determining the length of the alginate polymer. May serve to degrade mislocalized alginate that is trapped in the periplasmic space. The chain is Alginate lyase from Pseudomonas syringae pv. syringae.